A 290-amino-acid polypeptide reads, in one-letter code: Fructose-1,6-bisphosphatase class 1 (290 aa).

Mg(2+)-binding residues include E78, D96, L98, and D99. Substrate contacts are provided by residues 99-102, Y201, and K226; that span reads DGSS. Position 232 (E232) interacts with Mg(2+).

It belongs to the FBPase class 1 family. Homotetramer. The cofactor is Mg(2+).

The protein resides in the cytoplasm. The enzyme catalyses beta-D-fructose 1,6-bisphosphate + H2O = beta-D-fructose 6-phosphate + phosphate. The protein operates within carbohydrate biosynthesis; gluconeogenesis. The chain is Fructose-1,6-bisphosphatase class 1 from Helicobacter pylori (strain Shi470).